We begin with the raw amino-acid sequence, 150 residues long: Endoribonuclease YbeY (150 aa).

His113, His117, and His123 together coordinate Zn(2+).

It belongs to the endoribonuclease YbeY family. Requires Zn(2+) as cofactor.

It is found in the cytoplasm. Its function is as follows. Single strand-specific metallo-endoribonuclease involved in late-stage 70S ribosome quality control and in maturation of the 3' terminus of the 16S rRNA. This Malacoplasma penetrans (strain HF-2) (Mycoplasma penetrans) protein is Endoribonuclease YbeY.